The primary structure comprises 2073 residues: Putative mediator of RNA polymerase II transcription subunit 26 (2073 aa).

4 disordered regions span residues Ile22–Gln94, Pro115–Phe146, Gln241–Gln260, and Gln287–Gln334. Residues Asn31–Phe41 show a composition bias toward polar residues. The span at Asn42–Asn78 shows a compositional bias: low complexity. 2 coiled-coil regions span residues Ile166–Gln453 and Leu674–Ile710. Low complexity-rich tracts occupy residues Gln287–Gln314 and Gln322–Gln334. 10 disordered regions span residues Lys796–Ile879, Ile908–Ile1175, Asn1215–Asn1260, Asn1403–Lys1475, Lys1489–Pro1539, Ala1551–Ser1571, Lys1587–Lys1645, Ile1804–Ser1836, Asn1868–Asn1935, and Phe2019–Ser2073. Low complexity-rich tracts occupy residues Asn798 to Asn870 and Ser923 to Asn937. The segment covering Lys938–Ser947 has biased composition (basic residues). Over residues Leu953–Asp963 the composition is skewed to acidic residues. 5 stretches are compositionally biased toward low complexity: residues Ser964–Ser977, Ala1027–Thr1038, Pro1047–Thr1065, Ser1073–Ser1115, and Lys1127–Thr1156. The segment covering Leu1157–Ser1166 has biased composition (polar residues). Composition is skewed to low complexity over residues Asn1215–Val1258 and Asn1403–Asn1424. A compositionally biased stretch (basic and acidic residues) spans Ser1425–Lys1440. Composition is skewed to low complexity over residues Ser1444 to Ser1465, Leu1490 to Pro1520, Ser1527 to Pro1539, and Ala1551 to Gln1560. A compositionally biased stretch (polar residues) spans Glu1561–Ser1571. 2 stretches are compositionally biased toward low complexity: residues Ser1599–Ser1609 and Ile1804–Glu1817. Residues Asn1884 to Met1930 are a coiled coil.

This sequence belongs to the Mediator complex subunit 26 family. In terms of assembly, component of the Mediator complex.

Its subcellular location is the nucleus. Functionally, component of the Mediator complex, a coactivator involved in the regulated transcription of nearly all RNA polymerase II-dependent genes. Mediator functions as a bridge to convey information from gene-specific regulatory proteins to the basal RNA polymerase II transcription machinery. Mediator is recruited to promoters by direct interactions with regulatory proteins and serves as a scaffold for the assembly of a functional preinitiation complex with RNA polymerase II and the general transcription factors. This is Putative mediator of RNA polymerase II transcription subunit 26 (med26) from Dictyostelium discoideum (Social amoeba).